The sequence spans 334 residues: Adenosine deaminase (334 aa).

The Zn(2+) site is built by H12 and H14. 3 residues coordinate substrate: H14, D16, and G170. Residue H197 coordinates Zn(2+). E200 (proton donor) is an active-site residue. D278 contributes to the Zn(2+) binding site. D279 contacts substrate.

It belongs to the metallo-dependent hydrolases superfamily. Adenosine and AMP deaminases family. Adenosine deaminase subfamily. Zn(2+) is required as a cofactor.

It carries out the reaction adenosine + H2O + H(+) = inosine + NH4(+). The catalysed reaction is 2'-deoxyadenosine + H2O + H(+) = 2'-deoxyinosine + NH4(+). In terms of biological role, catalyzes the hydrolytic deamination of adenosine and 2-deoxyadenosine. This Yersinia pseudotuberculosis serotype IB (strain PB1/+) protein is Adenosine deaminase.